The sequence spans 148 residues: 3-dehydroquinate dehydratase (148 aa).

The Proton acceptor role is filled by Tyr23. Asn75, His81, and Asp88 together coordinate substrate. The active-site Proton donor is His101. Substrate-binding positions include 102–103 and Arg112; that span reads LS.

This sequence belongs to the type-II 3-dehydroquinase family. Homododecamer.

The enzyme catalyses 3-dehydroquinate = 3-dehydroshikimate + H2O. Its pathway is metabolic intermediate biosynthesis; chorismate biosynthesis; chorismate from D-erythrose 4-phosphate and phosphoenolpyruvate: step 3/7. In terms of biological role, catalyzes a trans-dehydration via an enolate intermediate. The chain is 3-dehydroquinate dehydratase from Xylella fastidiosa (strain 9a5c).